The sequence spans 426 residues: UPF0329 protein ECU06_0040 (426 aa).

A compositionally biased stretch (basic and acidic residues) spans Arg-136–Ala-172. Positions Arg-136–Arg-230 are disordered. Residues Lys-220–Arg-230 are compositionally biased toward basic residues.

This sequence belongs to the UPF0329 family.

The chain is UPF0329 protein ECU06_0040 from Encephalitozoon cuniculi (strain GB-M1) (Microsporidian parasite).